The chain runs to 86 residues: Large ribosomal subunit protein bL27 (86 aa).

Residues 1-21 (MAHHKGGGSSRNGKDSNPQYL) are disordered.

Belongs to the bacterial ribosomal protein bL27 family.

This chain is Large ribosomal subunit protein bL27, found in Coprothermobacter proteolyticus (strain ATCC 35245 / DSM 5265 / OCM 4 / BT).